The chain runs to 113 residues: Meiotically up-regulated gene 98 protein, mitochondrial (113 aa).

The protein localises to the mitochondrion. Functionally, has a role in meiosis. This is Meiotically up-regulated gene 98 protein, mitochondrial (mug98) from Schizosaccharomyces pombe (strain 972 / ATCC 24843) (Fission yeast).